The chain runs to 211 residues: ATP-dependent Clp protease proteolytic subunit (211 aa).

Serine 106 acts as the Nucleophile in catalysis. Residue histidine 131 is part of the active site.

The protein belongs to the peptidase S14 family. As to quaternary structure, fourteen ClpP subunits assemble into 2 heptameric rings which stack back to back to give a disk-like structure with a central cavity, resembling the structure of eukaryotic proteasomes.

It localises to the cytoplasm. It catalyses the reaction Hydrolysis of proteins to small peptides in the presence of ATP and magnesium. alpha-casein is the usual test substrate. In the absence of ATP, only oligopeptides shorter than five residues are hydrolyzed (such as succinyl-Leu-Tyr-|-NHMec, and Leu-Tyr-Leu-|-Tyr-Trp, in which cleavage of the -Tyr-|-Leu- and -Tyr-|-Trp bonds also occurs).. Cleaves peptides in various proteins in a process that requires ATP hydrolysis. Has a chymotrypsin-like activity. Plays a major role in the degradation of misfolded proteins. In Nitrobacter hamburgensis (strain DSM 10229 / NCIMB 13809 / X14), this protein is ATP-dependent Clp protease proteolytic subunit.